The following is a 197-amino-acid chain: HTH-type transcriptional regulator BetI (197 aa).

Residues 8 to 68 enclose the HTH tetR-type domain; sequence PIRRQQLIEA…ATMRYLMSVL (61 aa). Residues 31-50 constitute a DNA-binding region (H-T-H motif); sequence SIALIARLAGVSNGIISHYF.

Its pathway is amine and polyamine biosynthesis; betaine biosynthesis via choline pathway [regulation]. Functionally, repressor involved in the biosynthesis of the osmoprotectant glycine betaine. It represses transcription of the choline transporter BetT and the genes of BetAB involved in the synthesis of glycine betaine. This is HTH-type transcriptional regulator BetI from Pseudomonas fluorescens (strain Pf0-1).